Here is a 458-residue protein sequence, read N- to C-terminus: 5'-adenylylsulfate reductase 3, chloroplastic (458 aa).

The interval Met-1–Asp-24 is disordered. Residues Met-1 to Val-69 constitute a chloroplast transit peptide. The segment covering Ser-8 to Ser-23 has biased composition (low complexity). The tract at residues Ala-70–Gly-319 is reductase domain. The region spanning Ala-337–Arg-458 is the Thioredoxin domain. Active-site nucleophile residues include Cys-378 and Cys-381. A disulfide bridge links Cys-378 with Cys-381.

This sequence belongs to the APS reductase family. The cofactor is [4Fe-4S] cluster. Leaves, roots and stem.

The protein resides in the plastid. It is found in the chloroplast. It carries out the reaction glutathione disulfide + sulfite + AMP + 2 H(+) = adenosine 5'-phosphosulfate + 2 glutathione. Its activity is regulated as follows. Stimulated by sodium sulfate &gt; ammonium sulfate. In terms of biological role, reduces sulfate for Cys biosynthesis. Substrate preference is adenosine-5'-phosphosulfate (APS) &gt;&gt; 3'-phosphoadenosine-5'-phosphosulfate (PAPS). Uses glutathione or DTT as source of protons. The chain is 5'-adenylylsulfate reductase 3, chloroplastic (APR3) from Arabidopsis thaliana (Mouse-ear cress).